The sequence spans 230 residues: Androgen-dependent TFPI-regulating protein (230 aa).

Residues 1–3 lie on the Cytoplasmic side of the membrane; the sequence is MTK. Residues 4 to 24 traverse the membrane as a helical segment; the sequence is TSTCIYHFLVLSWYTFLNYYI. The Extracellular segment spans residues 25 to 46; that stretch reads SQEGKDEVKPKILANGARWKYM. A helical membrane pass occupies residues 47 to 67; sequence TLLNLLLQTIFYGVTCLDDVL. Residues 68–85 lie on the Cytoplasmic side of the membrane; it reads KRTKGGKDIKFLTAFRDL. Residues 86–106 form a helical membrane-spanning segment; the sequence is LFTTLAFPVSTFVFLAFWILF. At 107–119 the chain is on the extracellular side; the sequence is LYNRDLIYPKVLD. Residues 120–140 form a helical membrane-spanning segment; it reads TVIPVWLNHAMHTFIFPITLA. Topologically, residues 141-154 are cytoplasmic; that stretch reads EVVLRPHSYPSKKT. The helical transmembrane segment at 155 to 175 threads the bilayer; that stretch reads GLTLLAAASIAYISRILWLYF. Residues 176–189 are Extracellular-facing; that stretch reads ETGTWVYPVFAKLS. A helical transmembrane segment spans residues 190 to 210; sequence LLGLAAFFSLSYVFIASIYLL. Residues 211-230 lie on the Cytoplasmic side of the membrane; sequence GEKLNHWKWGDMRQPRKKRK.

This sequence belongs to the AIG1 family. In terms of tissue distribution, expressed in cultured endothelial cells and in placenta.

The protein localises to the cell membrane. The catalysed reaction is 9-hexadecanoyloxy-octadecanoate + H2O = 9-hydroxy-octadecanoate + hexadecanoate + H(+). The enzyme catalyses 12-hexadecanoyloxy-octadecanoate + H2O = 12-hydroxyoctadecanoate + hexadecanoate + H(+). It carries out the reaction 9-(9Z-hexadecenoyloxy)-octadecanoate + H2O = (9Z)-hexadecenoate + 9-hydroxy-octadecanoate + H(+). It catalyses the reaction 12-(9Z-hexadecenoyloxy)-octadecanoate + H2O = 12-hydroxyoctadecanoate + (9Z)-hexadecenoate + H(+). The catalysed reaction is 13-(9Z-hexadecenoyloxy)-octadecanoate + H2O = 13-hydroxy-octadecanoate + (9Z)-hexadecenoate + H(+). The enzyme catalyses 9-octadecanoyloxy-octadecanoate + H2O = 9-hydroxy-octadecanoate + octadecanoate + H(+). It carries out the reaction 12-octadecanoyloxy-octadecanoate + H2O = 12-hydroxyoctadecanoate + octadecanoate + H(+). It catalyses the reaction 13-octadecanoyloxy-octadecanoate + H2O = 13-hydroxy-octadecanoate + octadecanoate + H(+). The catalysed reaction is 9-(9Z-octadecenoyloxy)-octadecanoate + H2O = 9-hydroxy-octadecanoate + (9Z)-octadecenoate + H(+). The enzyme catalyses 12-(9Z-octadecenoyloxy)-octadecanoate + H2O = 12-hydroxyoctadecanoate + (9Z)-octadecenoate + H(+). It carries out the reaction 13-(9Z-octadecenoyloxy)-octadecanoate + H2O = 13-hydroxy-octadecanoate + (9Z)-octadecenoate + H(+). It catalyses the reaction 5-(9Z-octadecenoyloxy)-octadecanoate + H2O = 5-hydroxy-octadecanoate + (9Z)-octadecenoate + H(+). Its activity is regulated as follows. Inhibited by N-hydroxyhydantoin carbamate JJH260 and beta-lactone KC01. Hydrolyzes bioactive fatty-acid esters of hydroxy-fatty acids (FAHFAs), but not other major classes of lipids. Show a preference for FAHFAs with branching distal from the carboxylate head group of the lipids. Regulates the expression and the cell-associated anticoagulant activity of the inhibitor TFPI in endothelial cells (in vitro). The sequence is that of Androgen-dependent TFPI-regulating protein (ADTRP) from Homo sapiens (Human).